Consider the following 553-residue polypeptide: MRSDTITQGLERTPHRALLKGTGLPQSEMGKPFIGIATSFTDLIPGHVGMRDLERFIEKGVHTGGGYSFFFGIPGVCDGISMGHKGMHYSLPTRELIADMVESVAEAHRLDGLVLLTNCDKITPGMLMAAARLDIPCIVVTAGPMMSGRGDAGRKYSFVTDTFEAMARYKAGVIDDAELARCEENACPGMGSCQGLFTANTMAILTETLGMSLPRCGTALAVSALKRRIAFASGERIVDLVRQNITPRSIMTREAFENAIRVDLALGGSSNTVLHLLAIAHEAGVELPLETFDILAKETPQLASMNPAGEHFMEDLDVAGGVAGVLKQLGDKIHDCPTLMGLSTKEIAASLKGVDEEVIHPLSNPVKKEGGIAVLFGNICPKGAVVKQSGVSDQMMKFTGTARCFDSEDKAMAAMMGGVVKGGDVVVIRYEGPKGGPGMREMLAPTAALMGLGLGDSVALITDGRFSGGTRGPCIGHIAPEAAAGGPIAFIEDGDTIELDIPARSLKVMVSDEVLAERRARWVAPEPKIKKGWLARYAKVVTSAHTGAITTAE.

Asp78 contacts Mg(2+). Cys119 contributes to the [2Fe-2S] cluster binding site. Mg(2+) contacts are provided by Asp120 and Lys121. Residue Lys121 is modified to N6-carboxylysine. A [2Fe-2S] cluster-binding site is contributed by Cys193. Position 441 (Glu441) interacts with Mg(2+). Ser467 functions as the Proton acceptor in the catalytic mechanism.

It belongs to the IlvD/Edd family. As to quaternary structure, homodimer. The cofactor is [2Fe-2S] cluster. Mg(2+) is required as a cofactor.

It carries out the reaction (2R)-2,3-dihydroxy-3-methylbutanoate = 3-methyl-2-oxobutanoate + H2O. The enzyme catalyses (2R,3R)-2,3-dihydroxy-3-methylpentanoate = (S)-3-methyl-2-oxopentanoate + H2O. Its pathway is amino-acid biosynthesis; L-isoleucine biosynthesis; L-isoleucine from 2-oxobutanoate: step 3/4. It functions in the pathway amino-acid biosynthesis; L-valine biosynthesis; L-valine from pyruvate: step 3/4. Its function is as follows. Functions in the biosynthesis of branched-chain amino acids. Catalyzes the dehydration of (2R,3R)-2,3-dihydroxy-3-methylpentanoate (2,3-dihydroxy-3-methylvalerate) into 2-oxo-3-methylpentanoate (2-oxo-3-methylvalerate) and of (2R)-2,3-dihydroxy-3-methylbutanoate (2,3-dihydroxyisovalerate) into 2-oxo-3-methylbutanoate (2-oxoisovalerate), the penultimate precursor to L-isoleucine and L-valine, respectively. This Geobacter sp. (strain M21) protein is Dihydroxy-acid dehydratase.